A 321-amino-acid chain; its full sequence is Serine protease 52 (321 aa).

A signal peptide spans 1 to 27 (MKRWKDRRTGLLLPLVLLLFGACSSLA). Residues 56–287 (IVGGKPANIL…YVRWISKQTA (232 aa)) form the Peptidase S1 domain. C81 and C97 form a disulfide bridge. Active-site charge relay system residues include H96 and D142. N153 is a glycosylation site (N-linked (GlcNAc...) asparagine). Cystine bridges form between C175/C242, C208/C221, and C232/C263. S236 (charge relay system) is an active-site residue. A helical transmembrane segment spans residues 300–320 (ACPLVLSCRAILFLYFVMFLL).

This sequence belongs to the peptidase S1 family.

It localises to the membrane. In terms of biological role, probable serine protease. This is Serine protease 52 (Prss52) from Mus musculus (Mouse).